Reading from the N-terminus, the 596-residue chain is Tripeptidyl-peptidase SED2 (596 aa).

The signal sequence occupies residues 1-16 (MLVLKFVCLLASVAAA). Positions 18 to 203 (PTSWSSHKVV…LEAMSEEEFS (186 aa)) are cleaved as a propeptide — removed in mature form. The region spanning 210 to 596 (LVTTACLREL…NFQALTKVLP (387 aa)) is the Peptidase S53 domain. The N-linked (GlcNAc...) asparagine glycan is linked to asparagine 265. Catalysis depends on charge relay system residues glutamate 286 and aspartate 290. The N-linked (GlcNAc...) asparagine glycan is linked to asparagine 403. Catalysis depends on serine 501, which acts as the Charge relay system. Ca(2+)-binding residues include aspartate 543 and isoleucine 544. An N-linked (GlcNAc...) asparagine glycan is attached at asparagine 572. 2 residues coordinate Ca(2+): glycine 576 and aspartate 578.

Requires Ca(2+) as cofactor.

Its subcellular location is the secreted. It is found in the extracellular space. The enzyme catalyses Release of an N-terminal tripeptide from a polypeptide.. Secreted tripeptidyl-peptidase which degrades proteins at acidic pHs and is involved in virulence. This chain is Tripeptidyl-peptidase SED2 (SED2), found in Arthroderma otae (strain ATCC MYA-4605 / CBS 113480) (Microsporum canis).